The chain runs to 214 residues: MSNANNNGQATAKGGCCGGGGSQDNKANQNSGIVVSNTSTDNRNKFDKGFKLVLLGEMNTGKTCISSRLVRNEFGPTDSTIGAAFLVKSMVVDNINIKLEIWDTAGQERYRSLTPMYYRGAAAAVVVYDITKKNTFETLKRWVSELQKHASPNLILALAGNKVDLPNREVQVDEVNRYISELGNAIFFETSAASGQNINELFTEICRRLIENYK.

56 to 63 provides a ligand contact to GTP; that stretch reads GEMNTGKT. The Effector region motif lies at 77–85; that stretch reads TDSTIGAAF. Residues 103-107 and 161-164 each bind GTP; these read DTAGQ and NKVD.

This sequence belongs to the small GTPase superfamily. Rab family. This sequence lacks the C-terminal cysteine motifs subject to isoprenylation in other Rab proteins.

The sequence is that of Putative ras-related protein Rab-5B (rab5B) from Dictyostelium discoideum (Social amoeba).